The following is a 148-amino-acid chain: UPF0758 protein YeeS (148 aa).

An MPN domain is found at alanine 26–leucine 148. Zn(2+) is bound by residues histidine 97, histidine 99, and aspartate 110. The JAMM motif motif lies at histidine 97 to aspartate 110.

Belongs to the UPF0758 family.

The protein is UPF0758 protein YeeS (yeeS) of Escherichia coli (strain K12).